Here is a 189-residue protein sequence, read N- to C-terminus: Tumor protein p53-inducible protein 11 (189 aa).

Over Met-1–Arg-63 the chain is Cytoplasmic. Residue Ser-14 is modified to Phosphoserine. The helical transmembrane segment at Val-64 to Pro-84 threads the bilayer. At Asp-85–Gly-108 the chain is on the extracellular side. Residues Ala-109–Ile-129 form a helical membrane-spanning segment. Arg-130 is a topological domain (cytoplasmic). Residues Trp-131–Leu-151 form a helical membrane-spanning segment. At Ala-152–Gln-159 the chain is on the extracellular side. Residues Gly-160 to Tyr-180 form a helical membrane-spanning segment. Residues Gln-181–Val-189 lie on the Cytoplasmic side of the membrane.

The protein localises to the membrane. This chain is Tumor protein p53-inducible protein 11 (TP53I11), found in Bos taurus (Bovine).